Here is a 76-residue protein sequence, read N- to C-terminus: Translational regulator CsrA (76 aa).

This sequence belongs to the CsrA/RsmA family. Homodimer; the beta-strands of each monomer intercalate to form a hydrophobic core, while the alpha-helices form wings that extend away from the core.

The protein localises to the cytoplasm. Its function is as follows. A translational regulator that binds mRNA to regulate translation initiation and/or mRNA stability. Usually binds in the 5'-UTR at or near the Shine-Dalgarno sequence preventing ribosome-binding, thus repressing translation. Its main target seems to be the major flagellin gene, while its function is anatagonized by FliW. The sequence is that of Translational regulator CsrA from Helicobacter pylori (strain P12).